The following is a 305-amino-acid chain: Glycine--tRNA ligase alpha subunit (305 aa).

Belongs to the class-II aminoacyl-tRNA synthetase family. In terms of assembly, tetramer of two alpha and two beta subunits.

It localises to the cytoplasm. It carries out the reaction tRNA(Gly) + glycine + ATP = glycyl-tRNA(Gly) + AMP + diphosphate. This Vibrio vulnificus (strain CMCP6) protein is Glycine--tRNA ligase alpha subunit.